The sequence spans 503 residues: Cobyric acid synthase (503 aa).

One can recognise a GATase cobBQ-type domain in the interval 255 to 444; sequence AIDVAVIRCP…MHDLFHNDAF (190 aa). Residue cysteine 337 is the Nucleophile of the active site. Histidine 436 is an active-site residue.

The protein belongs to the CobB/CobQ family. CobQ subfamily.

It functions in the pathway cofactor biosynthesis; adenosylcobalamin biosynthesis. Catalyzes amidations at positions B, D, E, and G on adenosylcobyrinic A,C-diamide. NH(2) groups are provided by glutamine, and one molecule of ATP is hydrogenolyzed for each amidation. The protein is Cobyric acid synthase of Geobacillus kaustophilus (strain HTA426).